The primary structure comprises 34 residues: Photosystem II reaction center protein M (34 aa).

Residues 5-25 form a helical membrane-spanning segment; it reads ILAFIATALFILVPTAFLLII.

Belongs to the PsbM family. In terms of assembly, PSII is composed of 1 copy each of membrane proteins PsbA, PsbB, PsbC, PsbD, PsbE, PsbF, PsbH, PsbI, PsbJ, PsbK, PsbL, PsbM, PsbT, PsbX, PsbY, PsbZ, Psb30/Ycf12, at least 3 peripheral proteins of the oxygen-evolving complex and a large number of cofactors. It forms dimeric complexes.

It is found in the plastid. It localises to the chloroplast thylakoid membrane. Functionally, one of the components of the core complex of photosystem II (PSII). PSII is a light-driven water:plastoquinone oxidoreductase that uses light energy to abstract electrons from H(2)O, generating O(2) and a proton gradient subsequently used for ATP formation. It consists of a core antenna complex that captures photons, and an electron transfer chain that converts photonic excitation into a charge separation. This subunit is found at the monomer-monomer interface. In Ceratophyllum demersum (Rigid hornwort), this protein is Photosystem II reaction center protein M.